Here is a 460-residue protein sequence, read N- to C-terminus: GTPase Der (460 aa).

2 consecutive EngA-type G domains span residues 2–164 and 196–368; these read QSII…HEEF and IRVG…ENFT. GTP is bound by residues 8-15, 55-59, 116-119, 202-209, 249-253, and 313-316; these read GKPNVGKS, DSGGL, NKVD, GRVNVGKS, DTAGI, and NKWD. The region spanning 369–453 is the KH-like domain; it reads QKIQTSKLNT…PLVIASRKKG (85 aa).

Belongs to the TRAFAC class TrmE-Era-EngA-EngB-Septin-like GTPase superfamily. EngA (Der) GTPase family. Associates with the 50S ribosomal subunit.

Functionally, GTPase that plays an essential role in the late steps of ribosome biogenesis. The polypeptide is GTPase Der (Campylobacter jejuni subsp. jejuni serotype O:2 (strain ATCC 700819 / NCTC 11168)).